We begin with the raw amino-acid sequence, 26 residues long: uncharacterized protein (26 aa).

The helical transmembrane segment at 3-23 (IIYLILFLIVIYLLYRILDVL) threads the bilayer.

Its subcellular location is the membrane. This is an uncharacterized protein from Helicobacter pylori (strain J99 / ATCC 700824) (Campylobacter pylori J99).